A 340-amino-acid polypeptide reads, in one-letter code: Heat-inducible transcription repressor HrcA (340 aa).

It belongs to the HrcA family.

Negative regulator of class I heat shock genes (grpE-dnaK-dnaJ and groELS operons). Prevents heat-shock induction of these operons. The protein is Heat-inducible transcription repressor HrcA of Burkholderia cenocepacia (strain HI2424).